The primary structure comprises 838 residues: Protein translocase subunit SecA (838 aa).

ATP is bound by residues Gln-85, 103–107 (GEGKT), and Asp-493. The Zn(2+) site is built by Cys-823, Cys-825, Cys-834, and His-835.

It belongs to the SecA family. In terms of assembly, monomer and homodimer. Part of the essential Sec protein translocation apparatus which comprises SecA, SecYEG and auxiliary proteins SecDF. Other proteins may also be involved. Requires Zn(2+) as cofactor.

It is found in the cell membrane. The protein localises to the cytoplasm. It catalyses the reaction ATP + H2O + cellular proteinSide 1 = ADP + phosphate + cellular proteinSide 2.. Part of the Sec protein translocase complex. Interacts with the SecYEG preprotein conducting channel. Has a central role in coupling the hydrolysis of ATP to the transfer of proteins into and across the cell membrane, serving as an ATP-driven molecular motor driving the stepwise translocation of polypeptide chains across the membrane. In Streptococcus gordonii (strain Challis / ATCC 35105 / BCRC 15272 / CH1 / DL1 / V288), this protein is Protein translocase subunit SecA.